We begin with the raw amino-acid sequence, 207 residues long: MRLLNIVSSPRGARSASIAVARAFVDAYRQTGATIDVDTLNVWEEDLPDFDSGAIGAKYKGVANAPMDEAEQSIWRRIQSLVKRFQDADRIVVGVPMWNFGYPYKLKQLIDLVSQRNMLFTFDGNAYAPLLEIPRALVIHVRGQSREPGAGADNPGFRHQADYIEFWLRFIGVSEVRSLTVEHTWGARASDSIERAQARAVEMAAEF.

FMN-binding positions include Ser9, 15-17 (SAS), and 97-100 (MWNF).

This sequence belongs to the azoreductase type 1 family. Homodimer. It depends on FMN as a cofactor.

It carries out the reaction 2 a quinone + NADH + H(+) = 2 a 1,4-benzosemiquinone + NAD(+). The catalysed reaction is N,N-dimethyl-1,4-phenylenediamine + anthranilate + 2 NAD(+) = 2-(4-dimethylaminophenyl)diazenylbenzoate + 2 NADH + 2 H(+). Quinone reductase that provides resistance to thiol-specific stress caused by electrophilic quinones. Its function is as follows. Also exhibits azoreductase activity. Catalyzes the reductive cleavage of the azo bond in aromatic azo compounds to the corresponding amines. The polypeptide is FMN-dependent NADH:quinone oxidoreductase 2 (Burkholderia lata (strain ATCC 17760 / DSM 23089 / LMG 22485 / NCIMB 9086 / R18194 / 383)).